Reading from the N-terminus, the 489-residue chain is Diacylglycerol O-acyltransferase 1 (489 aa).

The interval 1 to 54 (MGDRGGAGGSRRRRTGSRPSIQGGSGPAAAEEEVRDVGAGGDAPVRDTDKDGDV) is disordered. The Cytoplasmic portion of the chain corresponds to 1–80 (MGDRGGAGGS…SLFSSDSGFS (80 aa)). The interval 1 to 88 (MGDRGGAGGS…FSNYRGILNW (88 aa)) is involved in homomerization. Serine 20 carries the post-translational modification Phosphoserine. Over residues 44–53 (PVRDTDKDGD) the composition is skewed to basic and acidic residues. The helical transmembrane segment at 81 to 115 (NYRGILNWCVVMLILSNARLFLENLIKYGILVDPI) threads the bilayer. Residues 116 to 127 (QVVSLFLKDPYS) are Lumenal-facing. Positions 116 to 127 (QVVSLFLKDPYS) are extracellular loop 1 (EL1). A helical membrane pass occupies residues 128–153 (WPALCLVIVANIFAVAAFQVEKRLAV). The interval 128-489 (WPALCLVIVA…LNREAPAAGT (362 aa)) is MBOAT fold. At 154–158 (GALTE) the chain is on the cytoplasmic side. A helical membrane pass occupies residues 159-181 (QAGLLLHGVNLATILCFPAAVAF). The Lumenal portion of the chain corresponds to 182–188 (LLESITP). Residues 189–220 (VGSVLALMVYTILFLKLFSYRDVNLWCRERRA) form a helical membrane-spanning segment. Residues 221-274 (GAKAKAALAGKKANGGAAQRTVSYPDNLTYRDLYYFLFAPTLCYELNFPRSPRI) are Cytoplasmic-facing. Positions 225 to 277 (KAALAGKKANGGAAQRTVSYPDNLTYRDLYYFLFAPTLCYELNFPRSPRIRKR) are intracellular loop 1 (IL1). The chain crosses the membrane as a helical span at residues 275–309 (RKRFLLRRLLEMLFLTQLQVGLIQQWMVPAIQNSM). Topologically, residues 310 to 316 (KPFKDMD) are lumenal. The helical transmembrane segment at 317-354 (YSRIVERLLKLAVPNHLIWLIFFYWLFHSCLNAVAELM) threads the bilayer. The Cytoplasmic segment spans residues 355–400 (QFGDREFYRDWWNSESITYFWQNWNIPVHKWCIRHFYKPMLRRGSS). Residues 355–400 (QFGDREFYRDWWNSESITYFWQNWNIPVHKWCIRHFYKPMLRRGSS) form an intracellular loop 2 (IL2) region. The short motif at 361–367 (FYRDWWN) is the FYXDWWN motif element. Residues 375 to 383 (WQNWNIPVH), tyrosine 391, and arginine 405 contribute to the an acyl-CoA site. Residues 381–395 (PVHKWCIRHFYKPML) form an amphipathic helix (AH) region. The chain crosses the membrane as a helical span at residues 401–421 (KWAARTAVFLASAFFHEYLVS). The active site involves histidine 416. The Lumenal segment spans residues 422–429 (IPLRMFRL). A helical transmembrane segment spans residues 430–448 (WAFTGMMAQIPLAWIVGRF). At 449–450 (FR) the chain is on the cytoplasmic side. A helical membrane pass occupies residues 451 to 482 (GNYGNAAVWLSLIIGQPVAVLMYVHDYYVLNR). Position 478 (tyrosine 478) interacts with an acyl-CoA. Over 483–489 (EAPAAGT) the chain is Lumenal.

The protein belongs to the membrane-bound acyltransferase family. Sterol o-acyltransferase subfamily. Homodimer or homotetramer; both forms have similar enzymatic activities.

It is found in the endoplasmic reticulum membrane. The enzyme catalyses an acyl-CoA + a 1,2-diacyl-sn-glycerol = a triacyl-sn-glycerol + CoA. It catalyses the reaction all-trans-retinol + an acyl-CoA = an all-trans-retinyl ester + CoA. The catalysed reaction is 2-(9Z-octadecenoyl)-glycerol + (9Z)-octadecenoyl-CoA = 1,2-di-(9Z-octadecenoyl)-sn-glycerol + CoA. It carries out the reaction 1,2-di-(9Z-octadecenoyl)-sn-glycerol + (9Z)-octadecenoyl-CoA = 1,2,3-tri-(9Z-octadecenoyl)-glycerol + CoA. The enzyme catalyses all-trans-retinol + hexadecanoyl-CoA = all-trans-retinyl hexadecanoate + CoA. It catalyses the reaction 1-O-(9Z-octadecenyl)-glycerol + (9Z)-octadecenoyl-CoA = 1-O-(9Z-octadecyl)-3-(9Z-octadecenoyl)-glycerol + CoA. The catalysed reaction is 1-O-(9Z-octadecyl)-3-(9Z-octadecenoyl)-glycerol + (9Z)-octadecenoyl-CoA = 1-O-(9Z-octadecenyl)-2,3-di-(9Z-octadecenoyl)glycerol + CoA. It carries out the reaction 1-(9Z-octadecenoyl)-glycerol + (9Z)-octadecenoyl-CoA = 1,2-di-(9Z-octadecenoyl)-glycerol + CoA. The enzyme catalyses 1,2-di-(9Z-octadecenoyl)-glycerol + (9Z)-octadecenoate + H(+) = 1,2,3-tri-(9Z-octadecenoyl)-glycerol + H2O. It catalyses the reaction 1-octadecanoyl-2-(5Z,8Z,11Z,14Z-eicosatetraenoyl)-sn-glycerol + (9Z)-octadecenoyl-CoA = 1-octadecanoyl-2-(5Z,8Z,11Z,14Z)-eicosatetraenoyl-3-(9Z)-octadecenoyl-sn-glycerol + CoA. The catalysed reaction is hexadecane-1,2-diol + 2 hexadecanoyl-CoA = 1,2-O,O-dihexadecanoyl-1,2-hexadecanediol + 2 CoA. It carries out the reaction hexadecane-1,2-diol + hexadecanoyl-CoA = 2-hydroxyhexadecyl hexadecanoate + CoA. The enzyme catalyses 2-(9Z-octadecenoyl)-glycerol + hexadecanoyl-CoA = 1-hexadecanoyl-2-(9Z-octadecenoyl)-sn-glycerol + CoA. It catalyses the reaction 1,2-di-(9Z-octadecenoyl)-sn-glycerol + hexadecanoyl-CoA = 1,2-di-(9Z)-octadecenoyl-3-hexadecanoyl-sn-glycerol + CoA. The catalysed reaction is hexadecan-1-ol + hexadecanoyl-CoA = hexadecanyl hexadecanoate + CoA. It carries out the reaction 13-cis-retinol + hexadecanoyl-CoA = 13-cis-retinyl hexadecanoate + CoA. The enzyme catalyses 1,3-di-(9Z-octadecenoyl)-glycerol + (9Z)-octadecenoyl-CoA = 1,2,3-tri-(9Z-octadecenoyl)-glycerol + CoA. It catalyses the reaction 2,3-di-(9Z)-octadecenoyl-sn-glycerol + (9Z)-octadecenoyl-CoA = 1,2,3-tri-(9Z-octadecenoyl)-glycerol + CoA. The protein operates within lipid metabolism; glycerolipid metabolism. Its function is as follows. Catalyzes the terminal and only committed step in triacylglycerol synthesis by using diacylglycerol and fatty acyl CoA as substrates. Highly expressed in epithelial cells of the small intestine and its activity is essential for the absorption of dietary fats. In liver, plays a role in esterifying exogenous fatty acids to glycerol, and is required to synthesize fat for storage. Also present in female mammary glands, where it produces fat in the milk. May be involved in VLDL (very low density lipoprotein) assembly. In contrast to DGAT2 it is not essential for survival. Functions as the major acyl-CoA retinol acyltransferase (ARAT) in the skin, where it acts to maintain retinoid homeostasis and prevent retinoid toxicity leading to skin and hair disorders. Exhibits additional acyltransferase activities, includin acyl CoA:monoacylglycerol acyltransferase (MGAT), wax monoester and wax diester synthases. Also able to use 1-monoalkylglycerol (1-MAkG) as an acyl acceptor for the synthesis of monoalkyl-monoacylglycerol (MAMAG). The chain is Diacylglycerol O-acyltransferase 1 (DGAT1) from Bos taurus (Bovine).